The sequence spans 93 residues: Pyrimidine/purine nucleoside phosphorylase (93 aa).

It belongs to the nucleoside phosphorylase PpnP family.

The enzyme catalyses a purine D-ribonucleoside + phosphate = a purine nucleobase + alpha-D-ribose 1-phosphate. It catalyses the reaction adenosine + phosphate = alpha-D-ribose 1-phosphate + adenine. It carries out the reaction cytidine + phosphate = cytosine + alpha-D-ribose 1-phosphate. The catalysed reaction is guanosine + phosphate = alpha-D-ribose 1-phosphate + guanine. The enzyme catalyses inosine + phosphate = alpha-D-ribose 1-phosphate + hypoxanthine. It catalyses the reaction thymidine + phosphate = 2-deoxy-alpha-D-ribose 1-phosphate + thymine. It carries out the reaction uridine + phosphate = alpha-D-ribose 1-phosphate + uracil. The catalysed reaction is xanthosine + phosphate = alpha-D-ribose 1-phosphate + xanthine. In terms of biological role, catalyzes the phosphorolysis of diverse nucleosides, yielding D-ribose 1-phosphate and the respective free bases. Can use uridine, adenosine, guanosine, cytidine, thymidine, inosine and xanthosine as substrates. Also catalyzes the reverse reactions. In Vibrio atlanticus (strain LGP32) (Vibrio splendidus (strain Mel32)), this protein is Pyrimidine/purine nucleoside phosphorylase.